Reading from the N-terminus, the 117-residue chain is Large ribosomal subunit protein bL20c (117 aa).

The protein belongs to the bacterial ribosomal protein bL20 family.

It localises to the plastid. The protein localises to the chloroplast. Binds directly to 23S ribosomal RNA and is necessary for the in vitro assembly process of the 50S ribosomal subunit. It is not involved in the protein synthesizing functions of that subunit. The polypeptide is Large ribosomal subunit protein bL20c (Carica papaya (Papaya)).